A 132-amino-acid polypeptide reads, in one-letter code: L-ectoine synthase (132 aa).

It belongs to the ectoine synthase family.

The enzyme catalyses (2S)-4-acetamido-2-aminobutanoate = L-ectoine + H2O. The protein operates within amine and polyamine biosynthesis; ectoine biosynthesis; L-ectoine from L-aspartate 4-semialdehyde: step 3/3. Functionally, catalyzes the circularization of gamma-N-acetyl-alpha,gamma-diaminobutyric acid (ADABA) to ectoine (1,4,5,6-tetrahydro-2-methyl-4-pyrimidine carboxylic acid), which is an excellent osmoprotectant. The sequence is that of L-ectoine synthase from Hahella chejuensis (strain KCTC 2396).